The sequence spans 526 residues: Protein ERGIC-53-like (526 aa).

Residues methionine 1–threonine 25 form the signal peptide. Topologically, residues glycine 26–glutamine 462 are lumenal. One can recognise an L-type lectin-like domain in the interval arginine 31 to leucine 252. Asparagine 75 carries N-linked (GlcNAc...) asparagine glycosylation. The cysteines at positions 176 and 215 are disulfide-linked. A helical membrane pass occupies residues proline 463–phenylalanine 483. Over arginine 484–alanine 526 the chain is Cytoplasmic.

As to expression, highly expressed in normal and neoplastic prostate. Also expressed in cardiac atrium, salivary gland, spleen and selective cells in the CNS.

The protein resides in the endoplasmic reticulum-Golgi intermediate compartment membrane. The sequence is that of Protein ERGIC-53-like (LMAN1L) from Homo sapiens (Human).